The primary structure comprises 408 residues: Phosphopentomutase (408 aa).

Positions 10, 307, 312, 348, 349, and 360 each coordinate Mn(2+).

This sequence belongs to the phosphopentomutase family. It depends on Mn(2+) as a cofactor.

The protein resides in the cytoplasm. The enzyme catalyses 2-deoxy-alpha-D-ribose 1-phosphate = 2-deoxy-D-ribose 5-phosphate. It catalyses the reaction alpha-D-ribose 1-phosphate = D-ribose 5-phosphate. Its pathway is carbohydrate degradation; 2-deoxy-D-ribose 1-phosphate degradation; D-glyceraldehyde 3-phosphate and acetaldehyde from 2-deoxy-alpha-D-ribose 1-phosphate: step 1/2. Functionally, isomerase that catalyzes the conversion of deoxy-ribose 1-phosphate (dRib-1-P) and ribose 1-phosphate (Rib-1-P) to deoxy-ribose 5-phosphate (dRib-5-P) and ribose 5-phosphate (Rib-5-P), respectively. The sequence is that of Phosphopentomutase from Buchnera aphidicola subsp. Baizongia pistaciae (strain Bp).